Here is a 161-residue protein sequence, read N- to C-terminus: Deoxyuridine 5'-triphosphate nucleotidohydrolase (161 aa).

Residues 80-82, N93, 97-99, and K107 contribute to the substrate site; these read RSG and TVD.

It belongs to the dUTPase family. Mg(2+) is required as a cofactor.

It catalyses the reaction dUTP + H2O = dUMP + diphosphate + H(+). Its pathway is pyrimidine metabolism; dUMP biosynthesis; dUMP from dCTP (dUTP route): step 2/2. Functionally, this enzyme is involved in nucleotide metabolism: it produces dUMP, the immediate precursor of thymidine nucleotides and it decreases the intracellular concentration of dUTP so that uracil cannot be incorporated into DNA. The chain is Deoxyuridine 5'-triphosphate nucleotidohydrolase from Mesorhizobium japonicum (strain LMG 29417 / CECT 9101 / MAFF 303099) (Mesorhizobium loti (strain MAFF 303099)).